The primary structure comprises 136 residues: Ubiquinol-cytochrome c reductase complex assembly factor 2 (136 aa).

The N-terminal 13 residues, 1 to 13, are a transit peptide targeting the mitochondrion; sequence MAALRYRRFLKLC.

As to quaternary structure, interacts with UQCC1. Forms a complex, named COMB/coordinator of mitochondrial CYTB biogenesis, composed of UQCC1, UQCC2, UQCC4, UQCC5 and UQCC6; stabilizes nascent cytochrome b/MT-CYB and promotes its membrane insertion. Forms a complex, named COMA, composed of UQCC1, UQCC2 and UQCC4; activates MT-CYB translation. Forms a complex, named COMC, composed of UQCC1, UQCC2; UQCC3 and UQCC4; mediates MT-CYB hemylation and association with the first nuclear-encoded CIII subunit UQCRQ. As to expression, widely expressed with highest levels in brain, liver, kidney, heart, skeletal muscle, thymus, testis and pancreas (at protein level).

The protein localises to the mitochondrion matrix. It localises to the mitochondrion nucleoid. Its subcellular location is the mitochondrion. The protein resides in the mitochondrion intermembrane space. It is found in the mitochondrion inner membrane. Its function is as follows. Required for the assembly of the ubiquinol-cytochrome c reductase complex (mitochondrial respiratory chain complex III or cytochrome b-c1 complex). Plays a role in the modulation of respiratory chain activities such as oxygen consumption and ATP production and via its modulation of the respiratory chain activity can regulate skeletal muscle differentiation and insulin secretion by pancreatic beta-cells. Involved in cytochrome b translation and/or stability. The chain is Ubiquinol-cytochrome c reductase complex assembly factor 2 (Uqcc2) from Mus musculus (Mouse).